The following is a 240-amino-acid chain: MAPK-interacting and spindle-stabilizing protein-like (240 aa).

The interval 1–240 (MSDEFSLADA…PMPGGPHSYH (240 aa)) is disordered. An N-acetylserine modification is found at serine 2. Phosphoserine is present on residues serine 2, serine 6, and serine 15. Over residues 16–26 (PAKTSAVSNTK) the composition is skewed to polar residues. The span at 34–43 (WPGSNPWNNP) shows a compositional bias: low complexity. Composition is skewed to pro residues over residues 44–66 (SAPP…PFGP), 74–122 (SVPP…PELP), 159–185 (PNMP…PPVP), and 193–202 (AWGPPAPYPA).

It belongs to the MISS family.

The chain is MAPK-interacting and spindle-stabilizing protein-like (MAPK1IP1L) from Bos taurus (Bovine).